We begin with the raw amino-acid sequence, 471 residues long: Probable multidrug resistance protein NorM (471 aa).

11 helical membrane passes run 38–58, 69–89, 114–134, 152–172, 197–217, 266–286, 289–309, 334–354, 370–390, 409–429, and 434–454; these read PVVL…IVVG, AMAW…LVGV, VYAG…GPMF, LIVF…TFWL, LLLV…GAWA, GASN…CGWI, VAVA…MVPL, AGWI…LLLY, ALAL…PDAV, ITHL…LAIP, and LNGV…FLLM.

It belongs to the multi antimicrobial extrusion (MATE) (TC 2.A.66.1) family.

Its subcellular location is the cell inner membrane. Its function is as follows. Multidrug efflux pump. This Caulobacter vibrioides (strain ATCC 19089 / CIP 103742 / CB 15) (Caulobacter crescentus) protein is Probable multidrug resistance protein NorM (norM).